The following is a 191-amino-acid chain: Ribosome maturation factor RimM (191 aa).

The 84-residue stretch at 102–185 (EEEYHVSQLI…RIEINPPKGL (84 aa)) folds into the PRC barrel domain.

The protein belongs to the RimM family. Binds ribosomal protein uS19.

It localises to the cytoplasm. Functionally, an accessory protein needed during the final step in the assembly of 30S ribosomal subunit, possibly for assembly of the head region. Essential for efficient processing of 16S rRNA. May be needed both before and after RbfA during the maturation of 16S rRNA. It has affinity for free ribosomal 30S subunits but not for 70S ribosomes. This is Ribosome maturation factor RimM from Crocosphaera subtropica (strain ATCC 51142 / BH68) (Cyanothece sp. (strain ATCC 51142)).